Reading from the N-terminus, the 182-residue chain is Isopentenyl-diphosphate Delta-isomerase (182 aa).

His25 and His32 together coordinate Mn(2+). The Nudix hydrolase domain occupies 30 to 164; sequence LLHLAFSSWL…PWAFSPWMVM (135 aa). Residue Cys67 is part of the active site. Mn(2+) is bound at residue His69. Position 87 (Glu87) interacts with Mg(2+). Mn(2+) is bound by residues Glu114 and Glu116. Glu116 is an active-site residue.

The protein belongs to the IPP isomerase type 1 family. In terms of assembly, homodimer. The cofactor is Mg(2+). It depends on Mn(2+) as a cofactor.

The protein resides in the cytoplasm. The enzyme catalyses isopentenyl diphosphate = dimethylallyl diphosphate. It participates in isoprenoid biosynthesis; dimethylallyl diphosphate biosynthesis; dimethylallyl diphosphate from isopentenyl diphosphate: step 1/1. Functionally, catalyzes the 1,3-allylic rearrangement of the homoallylic substrate isopentenyl (IPP) to its highly electrophilic allylic isomer, dimethylallyl diphosphate (DMAPP). This is Isopentenyl-diphosphate Delta-isomerase from Escherichia coli O9:H4 (strain HS).